Consider the following 34-residue polypeptide: MVNWQVIGQLVSTGAIMLLGPAIIILLALKKGNL.

Residues 6–26 (VIGQLVSTGAIMLLGPAIIIL) form a helical membrane-spanning segment.

It belongs to the Psb30/Ycf12 family. As to quaternary structure, PSII is composed of 1 copy each of membrane proteins PsbA, PsbB, PsbC, PsbD, PsbE, PsbF, PsbH, PsbI, PsbJ, PsbK, PsbL, PsbM, PsbT, PsbX, PsbY, PsbZ, Psb30/Ycf12, peripheral proteins of the oxygen-evolving complex and a large number of cofactors. It forms dimeric complexes.

Its subcellular location is the plastid. The protein localises to the chloroplast thylakoid membrane. In terms of biological role, a core subunit of photosystem II (PSII), probably helps stabilize the reaction center. This chain is Photosystem II reaction center protein Psb30, found in Thalassiosira pseudonana (Marine diatom).